A 79-amino-acid polypeptide reads, in one-letter code: Large ribosomal subunit protein bL28 (79 aa).

This sequence belongs to the bacterial ribosomal protein bL28 family.

This Porphyromonas gingivalis (strain ATCC 33277 / DSM 20709 / CIP 103683 / JCM 12257 / NCTC 11834 / 2561) protein is Large ribosomal subunit protein bL28.